A 550-amino-acid polypeptide reads, in one-letter code: CTP synthase (550 aa).

The amidoligase domain stretch occupies residues 1–270 (MTKYVFVTGG…DRIICEELKL (270 aa)). CTP is bound at residue Ser13. Ser13 contacts UTP. Residues 14–19 (SLGKGI) and Asp71 contribute to the ATP site. The Mg(2+) site is built by Asp71 and Glu144. CTP-binding positions include 151 to 153 (DIE), 191 to 196 (KTKPTQ), and Lys227. Residues 191-196 (KTKPTQ) and Lys227 each bind UTP. Positions 295-547 (TIGMVGKYVD…VEAALANKQA (253 aa)) constitute a Glutamine amidotransferase type-1 domain. Position 356 (Gly356) interacts with L-glutamine. Cys383 serves as the catalytic Nucleophile; for glutamine hydrolysis. L-glutamine-binding positions include 384–387 (LGMQ), Glu407, and Arg473. Residues His520 and Glu522 contribute to the active site.

Belongs to the CTP synthase family. As to quaternary structure, homotetramer.

The enzyme catalyses UTP + L-glutamine + ATP + H2O = CTP + L-glutamate + ADP + phosphate + 2 H(+). The catalysed reaction is L-glutamine + H2O = L-glutamate + NH4(+). It carries out the reaction UTP + NH4(+) + ATP = CTP + ADP + phosphate + 2 H(+). It participates in pyrimidine metabolism; CTP biosynthesis via de novo pathway; CTP from UDP: step 2/2. Allosterically activated by GTP, when glutamine is the substrate; GTP has no effect on the reaction when ammonia is the substrate. The allosteric effector GTP functions by stabilizing the protein conformation that binds the tetrahedral intermediate(s) formed during glutamine hydrolysis. Inhibited by the product CTP, via allosteric rather than competitive inhibition. In terms of biological role, catalyzes the ATP-dependent amination of UTP to CTP with either L-glutamine or ammonia as the source of nitrogen. Regulates intracellular CTP levels through interactions with the four ribonucleotide triphosphates. In Burkholderia lata (strain ATCC 17760 / DSM 23089 / LMG 22485 / NCIMB 9086 / R18194 / 383), this protein is CTP synthase.